Consider the following 62-residue polypeptide: Conotoxin Sr5.7 (62 aa).

An N-terminal signal peptide occupies residues 1–22; it reads MRCLPVFVILLLLIASAPSVDA. The propeptide occupies 23 to 44; the sequence is QLKTKDDVPLASFHDNAKGTQH.

Belongs to the conotoxin T superfamily. Post-translationally, contains 2 disulfide bonds that can be either 'C1-C3, C2-C4' or 'C1-C4, C2-C3', since these disulfide connectivities have been observed for conotoxins with cysteine framework V (for examples, see AC P0DQQ7 and AC P81755). As to expression, expressed by the venom duct.

It localises to the secreted. This is Conotoxin Sr5.7 from Conus spurius (Alphabet cone).